Reading from the N-terminus, the 93-residue chain is CRISPR-associated endoribonuclease Cas2 (93 aa).

D13 lines the Mg(2+) pocket.

It belongs to the CRISPR-associated endoribonuclease Cas2 protein family. In terms of assembly, homodimer, forms a heterotetramer with a Cas1 homodimer. The cofactor is Mg(2+).

Functionally, CRISPR (clustered regularly interspaced short palindromic repeat), is an adaptive immune system that provides protection against mobile genetic elements (viruses, transposable elements and conjugative plasmids). CRISPR clusters contain sequences complementary to antecedent mobile elements and target invading nucleic acids. CRISPR clusters are transcribed and processed into CRISPR RNA (crRNA). Functions as a ssRNA-specific endoribonuclease. Involved in the integration of spacer DNA into the CRISPR cassette. The protein is CRISPR-associated endoribonuclease Cas2 of Korarchaeum cryptofilum (strain OPF8).